Here is a 248-residue protein sequence, read N- to C-terminus: DNA repair protein RecO (248 aa).

The protein belongs to the RecO family.

Involved in DNA repair and RecF pathway recombination. This is DNA repair protein RecO from Bacillus cytotoxicus (strain DSM 22905 / CIP 110041 / 391-98 / NVH 391-98).